Reading from the N-terminus, the 159-residue chain is Large ribosomal subunit protein uL22 (159 aa).

Belongs to the universal ribosomal protein uL22 family. Part of the 50S ribosomal subunit.

In terms of biological role, this protein binds specifically to 23S rRNA. It makes multiple contacts with different domains of the 23S rRNA in the assembled 50S subunit and ribosome. Its function is as follows. The globular domain of the protein is located near the polypeptide exit tunnel on the outside of the subunit, while an extended beta-hairpin is found that lines the wall of the exit tunnel in the center of the 70S ribosome. The sequence is that of Large ribosomal subunit protein uL22 from Ignicoccus hospitalis (strain KIN4/I / DSM 18386 / JCM 14125).